The primary structure comprises 250 residues: Probable aquaporin TIP-type (250 aa).

2 consecutive transmembrane segments (helical) span residues 20–42 (AYVAEFIATLLFVFAGVGSAIAY) and 55–77 (GLVAVAVAHAFALFVGVSMAANV). Positions 83-85 (NPA) match the NPA 1 motif. 3 consecutive transmembrane segments (helical) span residues 97 to 119 (TILTGLFYWIAQCLGSTVACLLL), 140 to 162 (IQGVVMEIIITFALVYTVYATAA), and 172 to 194 (IAPIAIGFIVGANILAAGPFSGG). The NPA 2 motif lies at 197 to 199 (NPA). The helical transmembrane segment at 215–237 (WIYWAGPLIGGALAGFIYGDVFI) threads the bilayer.

It belongs to the MIP/aquaporin (TC 1.A.8) family. TIP (TC 1.A.8.10) subfamily. Expressed in mature seeds and dark-grown seedlings.

It is found in the vacuole membrane. Functionally, channel protein in tonoplast. These proteins may allow the diffusion of amino acids and/or peptides from the vacuolar compartment to the cytoplasm. The chain is Probable aquaporin TIP-type (DIP) from Antirrhinum majus (Garden snapdragon).